The following is a 181-amino-acid chain: Adenine phosphoribosyltransferase (181 aa).

This sequence belongs to the purine/pyrimidine phosphoribosyltransferase family. In terms of assembly, homodimer.

The protein resides in the cytoplasm. It carries out the reaction AMP + diphosphate = 5-phospho-alpha-D-ribose 1-diphosphate + adenine. Its pathway is purine metabolism; AMP biosynthesis via salvage pathway; AMP from adenine: step 1/1. Catalyzes a salvage reaction resulting in the formation of AMP, that is energically less costly than de novo synthesis. The protein is Adenine phosphoribosyltransferase of Vibrio campbellii (strain ATCC BAA-1116).